The sequence spans 430 residues: UDP-N-acetylglucosamine 1-carboxyvinyltransferase (430 aa).

22–23 (KN) provides a ligand contact to phosphoenolpyruvate. UDP-N-acetyl-alpha-D-glucosamine is bound at residue R102. C126 (proton donor) is an active-site residue. 2-(S-cysteinyl)pyruvic acid O-phosphothioketal is present on C126. UDP-N-acetyl-alpha-D-glucosamine is bound by residues 131-135 (RPVDL), 172-175 (KVSV), D317, and I339.

This sequence belongs to the EPSP synthase family. MurA subfamily.

The protein localises to the cytoplasm. It catalyses the reaction phosphoenolpyruvate + UDP-N-acetyl-alpha-D-glucosamine = UDP-N-acetyl-3-O-(1-carboxyvinyl)-alpha-D-glucosamine + phosphate. Its pathway is cell wall biogenesis; peptidoglycan biosynthesis. Cell wall formation. Adds enolpyruvyl to UDP-N-acetylglucosamine. In Allorhizobium ampelinum (strain ATCC BAA-846 / DSM 112012 / S4) (Agrobacterium vitis (strain S4)), this protein is UDP-N-acetylglucosamine 1-carboxyvinyltransferase.